Here is a 222-residue protein sequence, read N- to C-terminus: MHIPDGYLGPITCAFFYLIMIPIWYKSIKELKKLDPRKLPLLGVLTAFSFLVMMFNLPVPDGTTAHMVGGTLIAILMDNPWVATIAISIVLIIQAIFFGDGGITCIGANCFNMGVVLPFVGYYVYKFLRDKVGEVIASGIGAYVGIVAAAIVAGFEFGLQPFIEPGYCPYPFTVSVPAMAFAHLITAGPAAAVVTAIVVWYVKKVRPDLFTSKEQQVSGVNA.

6 helical membrane passes run 3 to 23, 39 to 59, 81 to 101, 102 to 122, 135 to 155, and 180 to 200; these read IPDG…MIPI, LPLL…NLPV, WVAT…FGDG, GITC…FVGY, VIAS…VAGF, and AFAH…IVVW.

The protein belongs to the CbiM family.

The protein localises to the cell membrane. Functionally, may be involved in metal transport. The sequence is that of Putative metal transport protein MJ1569 from Methanocaldococcus jannaschii (strain ATCC 43067 / DSM 2661 / JAL-1 / JCM 10045 / NBRC 100440) (Methanococcus jannaschii).